We begin with the raw amino-acid sequence, 215 residues long: Uracil phosphoribosyltransferase (215 aa).

Residues Arg-77, Arg-102, and 129 to 137 contribute to the 5-phospho-alpha-D-ribose 1-diphosphate site; that span reads DPMLATGGS. Uracil contacts are provided by residues Ile-193 and 198-200; that span reads GDA. Asp-199 serves as a coordination point for 5-phospho-alpha-D-ribose 1-diphosphate.

Belongs to the UPRTase family. Mg(2+) serves as cofactor.

It catalyses the reaction UMP + diphosphate = 5-phospho-alpha-D-ribose 1-diphosphate + uracil. It functions in the pathway pyrimidine metabolism; UMP biosynthesis via salvage pathway; UMP from uracil: step 1/1. Its activity is regulated as follows. Allosterically activated by GTP. Catalyzes the conversion of uracil and 5-phospho-alpha-D-ribose 1-diphosphate (PRPP) to UMP and diphosphate. This Corynebacterium urealyticum (strain ATCC 43042 / DSM 7109) protein is Uracil phosphoribosyltransferase.